Here is an 89-residue protein sequence, read N- to C-terminus: Neuropeptide S (89 aa).

The first 23 residues, 1-23, serve as a signal peptide directing secretion; sequence MISSVKLNLILVLSLSTMHVFWC. A propeptide spanning residues 24-67 is cleaved from the precursor; it reads YPVPSSKVSGKSDYFLILLNSCPTRLDRSKELAFLKPILEKMFV.

The protein localises to the secreted. Functionally, modulates arousal and anxiety. May play an important anorexigenic role. Binds to its receptor NPSR1 with nanomolar affinity to increase intracellular calcium concentrations. This Homo sapiens (Human) protein is Neuropeptide S (NPS).